The sequence spans 159 residues: NADH-quinone oxidoreductase subunit I (159 aa).

4Fe-4S ferredoxin-type domains follow at residues Arg51–Asp80 and Thr90–Asn119. Positions 60, 63, 66, 70, 99, 102, 105, and 109 each coordinate [4Fe-4S] cluster.

Belongs to the complex I 23 kDa subunit family. NDH-1 is composed of 14 different subunits. Subunits NuoA, H, J, K, L, M, N constitute the membrane sector of the complex. [4Fe-4S] cluster is required as a cofactor.

Its subcellular location is the cell inner membrane. The catalysed reaction is a quinone + NADH + 5 H(+)(in) = a quinol + NAD(+) + 4 H(+)(out). Its function is as follows. NDH-1 shuttles electrons from NADH, via FMN and iron-sulfur (Fe-S) centers, to quinones in the respiratory chain. The immediate electron acceptor for the enzyme in this species is believed to be ubiquinone. Couples the redox reaction to proton translocation (for every two electrons transferred, four hydrogen ions are translocated across the cytoplasmic membrane), and thus conserves the redox energy in a proton gradient. In Rickettsia felis (strain ATCC VR-1525 / URRWXCal2) (Rickettsia azadi), this protein is NADH-quinone oxidoreductase subunit I.